The following is a 461-amino-acid chain: Fumarate hydratase class II (461 aa).

Residues 98–100 (SGT), 129–132 (HPND), 139–141 (SSN), and Thr-187 each bind substrate. The Proton donor/acceptor role is filled by His-188. The active site involves Ser-318. Residues Ser-319 and 324–326 (KVN) each bind substrate.

Belongs to the class-II fumarase/aspartase family. Fumarase subfamily. As to quaternary structure, homotetramer.

It localises to the cytoplasm. The catalysed reaction is (S)-malate = fumarate + H2O. Its pathway is carbohydrate metabolism; tricarboxylic acid cycle; (S)-malate from fumarate: step 1/1. Functionally, involved in the TCA cycle. Catalyzes the stereospecific interconversion of fumarate to L-malate. The protein is Fumarate hydratase class II of Rickettsia prowazekii (strain Madrid E).